Reading from the N-terminus, the 28-residue chain is Aspartate aminotransferase, mitochondrial (28 aa).

Belongs to the class-I pyridoxal-phosphate-dependent aminotransferase family. Homodimer. Pyridoxal 5'-phosphate serves as cofactor.

It localises to the mitochondrion matrix. It carries out the reaction L-aspartate + 2-oxoglutarate = oxaloacetate + L-glutamate. Functionally, plays a key role in amino acid metabolism. Important for metabolite exchange between mitochondria and cytosol. The polypeptide is Aspartate aminotransferase, mitochondrial (Catharanthus roseus (Madagascar periwinkle)).